The following is a 475-amino-acid chain: Argininosuccinate lyase (475 aa).

It belongs to the lyase 1 family. Argininosuccinate lyase subfamily.

Its subcellular location is the cytoplasm. It carries out the reaction 2-(N(omega)-L-arginino)succinate = fumarate + L-arginine. It functions in the pathway amino-acid biosynthesis; L-arginine biosynthesis; L-arginine from L-ornithine and carbamoyl phosphate: step 3/3. This is Argininosuccinate lyase from Streptomyces coelicolor (strain ATCC BAA-471 / A3(2) / M145).